Consider the following 252-residue polypeptide: Phosphate import ATP-binding protein PstB (252 aa).

An ABC transporter domain is found at methionine 5 to isoleucine 247. Glycine 37–serine 44 contributes to the ATP binding site.

This sequence belongs to the ABC transporter superfamily. Phosphate importer (TC 3.A.1.7) family. As to quaternary structure, the complex is composed of two ATP-binding proteins (PstB), two transmembrane proteins (PstC and PstA) and a solute-binding protein (PstS).

The protein localises to the cell inner membrane. It catalyses the reaction phosphate(out) + ATP + H2O = ADP + 2 phosphate(in) + H(+). In terms of biological role, part of the ABC transporter complex PstSACB involved in phosphate import. Responsible for energy coupling to the transport system. This Bartonella quintana (strain Toulouse) (Rochalimaea quintana) protein is Phosphate import ATP-binding protein PstB.